Consider the following 122-residue polypeptide: Small ribosomal subunit protein uS13 (122 aa).

Positions 93–122 (RRGLPVRGQRTKTNARTRKGPKKTVAGKKK) are disordered.

The protein belongs to the universal ribosomal protein uS13 family. In terms of assembly, part of the 30S ribosomal subunit. Forms a loose heterodimer with protein S19. Forms two bridges to the 50S subunit in the 70S ribosome.

Located at the top of the head of the 30S subunit, it contacts several helices of the 16S rRNA. In the 70S ribosome it contacts the 23S rRNA (bridge B1a) and protein L5 of the 50S subunit (bridge B1b), connecting the 2 subunits; these bridges are implicated in subunit movement. Contacts the tRNAs in the A and P-sites. In Micrococcus luteus (strain ATCC 4698 / DSM 20030 / JCM 1464 / CCM 169 / CCUG 5858 / IAM 1056 / NBRC 3333 / NCIMB 9278 / NCTC 2665 / VKM Ac-2230) (Micrococcus lysodeikticus), this protein is Small ribosomal subunit protein uS13.